Reading from the N-terminus, the 595-residue chain is uncharacterized protein (595 aa).

A run of 9 helical transmembrane segments spans residues Val-64–Phe-84, Ile-86–Leu-106, Phe-239–Ser-259, Phe-281–Pro-301, Val-334–Ile-354, Met-368–Ile-388, Phe-504–Met-524, Tyr-547–Thr-567, and Ile-571–Phe-591.

The protein to M.jannaschii FlaJ.

The protein resides in the cell membrane. This is an uncharacterized protein from Methanocaldococcus jannaschii (strain ATCC 43067 / DSM 2661 / JAL-1 / JCM 10045 / NBRC 100440) (Methanococcus jannaschii).